Reading from the N-terminus, the 161-residue chain is UPF0178 protein PXO_00400 (161 aa).

It belongs to the UPF0178 family.

The protein is UPF0178 protein PXO_00400 of Xanthomonas oryzae pv. oryzae (strain PXO99A).